The following is a 213-amino-acid chain: Endonuclease III (213 aa).

In terms of domain architecture, HhH spans 101-120 (LEELLKLPGVGRKTANIVLW). Residues cysteine 180, cysteine 187, cysteine 190, and cysteine 196 each contribute to the [4Fe-4S] cluster site.

It belongs to the Nth/MutY family. [4Fe-4S] cluster is required as a cofactor.

It catalyses the reaction 2'-deoxyribonucleotide-(2'-deoxyribose 5'-phosphate)-2'-deoxyribonucleotide-DNA = a 3'-end 2'-deoxyribonucleotide-(2,3-dehydro-2,3-deoxyribose 5'-phosphate)-DNA + a 5'-end 5'-phospho-2'-deoxyribonucleoside-DNA + H(+). Its function is as follows. DNA repair enzyme that has both DNA N-glycosylase activity and AP-lyase activity. The DNA N-glycosylase activity releases various damaged pyrimidines from DNA by cleaving the N-glycosidic bond, leaving an AP (apurinic/apyrimidinic) site. The AP-lyase activity cleaves the phosphodiester bond 3' to the AP site by a beta-elimination, leaving a 3'-terminal unsaturated sugar and a product with a terminal 5'-phosphate. This is Endonuclease III from Thermotoga maritima (strain ATCC 43589 / DSM 3109 / JCM 10099 / NBRC 100826 / MSB8).